Here is a 461-residue protein sequence, read N- to C-terminus: Complement C1r subcomponent-like protein (461 aa).

An N-terminal signal peptide occupies residues 1–22 (MCWLLLWGILHTCPTQASVLLA). Residues 23–139 (QQFPQQLTSP…KGFLALYQAA (117 aa)) form the CUB domain. Intrachain disulfides connect Cys-71–Cys-89 and Cys-164–Cys-197. The 62-residue stretch at 138–199 (AAVSQPNGDA…RGEEVPECVP (62 aa)) folds into the Sushi domain. The region spanning 214-453 (TFGSSRAKPG…YVDWIKGVIE (240 aa)) is the Peptidase S1 domain. His-252 (charge relay system) is an active-site residue. N-linked (GlcNAc...) asparagine glycosylation occurs at Asn-265. Asp-308 serves as the catalytic Charge relay system. Asn-332 carries an N-linked (GlcNAc...) asparagine glycan. Disulfide bonds link Cys-371–Cys-390 and Cys-401–Cys-431. Catalysis depends on Ser-405, which acts as the Charge relay system.

It belongs to the peptidase S1 family.

The protein localises to the secreted. In terms of biological role, mediates the proteolytic cleavage of HP/haptoglobin in the endoplasmic reticulum. The polypeptide is Complement C1r subcomponent-like protein (C1rl) (Rattus norvegicus (Rat)).